The following is a 320-amino-acid chain: Beta-ketoacyl-[acyl-carrier-protein] synthase III (320 aa).

Residues Cys114 and His247 contribute to the active site. Residues 248–252 form an ACP-binding region; sequence QANRR. Asn277 is an active-site residue.

This sequence belongs to the thiolase-like superfamily. FabH family. In terms of assembly, homodimer.

The protein resides in the cytoplasm. The enzyme catalyses malonyl-[ACP] + acetyl-CoA + H(+) = 3-oxobutanoyl-[ACP] + CO2 + CoA. It functions in the pathway lipid metabolism; fatty acid biosynthesis. Catalyzes the condensation reaction of fatty acid synthesis by the addition to an acyl acceptor of two carbons from malonyl-ACP. Catalyzes the first condensation reaction which initiates fatty acid synthesis and may therefore play a role in governing the total rate of fatty acid production. Possesses both acetoacetyl-ACP synthase and acetyl transacylase activities. Its substrate specificity determines the biosynthesis of branched-chain and/or straight-chain of fatty acids. The chain is Beta-ketoacyl-[acyl-carrier-protein] synthase III from Neisseria meningitidis serogroup B (strain ATCC BAA-335 / MC58).